Reading from the N-terminus, the 201-residue chain is FMN-dependent NADH:quinone oxidoreductase (201 aa).

Residues S9, 16 to 18 (SVS), and 93 to 96 (MYNF) each bind FMN.

This sequence belongs to the azoreductase type 1 family. As to quaternary structure, homodimer. FMN is required as a cofactor.

The catalysed reaction is 2 a quinone + NADH + H(+) = 2 a 1,4-benzosemiquinone + NAD(+). It carries out the reaction N,N-dimethyl-1,4-phenylenediamine + anthranilate + 2 NAD(+) = 2-(4-dimethylaminophenyl)diazenylbenzoate + 2 NADH + 2 H(+). Its function is as follows. Quinone reductase that provides resistance to thiol-specific stress caused by electrophilic quinones. Functionally, also exhibits azoreductase activity. Catalyzes the reductive cleavage of the azo bond in aromatic azo compounds to the corresponding amines. The polypeptide is FMN-dependent NADH:quinone oxidoreductase (Gluconacetobacter diazotrophicus (strain ATCC 49037 / DSM 5601 / CCUG 37298 / CIP 103539 / LMG 7603 / PAl5)).